The following is a 368-amino-acid chain: N-acetylneuraminate epimerase (368 aa).

The N-terminal stretch at 1–19 (MNKTITALTIIMASFATNA) is a signal peptide. Kelch repeat units follow at residues 40–84 (TVYI…AFID), 86–137 (NLYV…FVHN), 139–173 (KAYVTGGVNQNIFNGYFEDLNEAGKDSTTIDKINA), 174–219 (HYFD…VNKG), 222–265 (TWLI…VAGG), 287–336 (ENYQ…PWNN), and 338–367 (LLIIGGETAGGKAVTDSVLISVKDNKVTVQ). Glutamate 228 (proton acceptor) is an active-site residue.

This sequence belongs to the NanM family. Homodimer.

It is found in the periplasm. It carries out the reaction N-acetyl-alpha-neuraminate = N-acetyl-beta-neuraminate. Functionally, converts alpha-N-acetylneuranimic acid (Neu5Ac) to the beta-anomer, accelerating the equilibrium between the alpha- and beta-anomers. Probably facilitates sialidase-negative bacteria to compete successfully for limited amounts of extracellular Neu5Ac, which is likely taken up in the beta-anomer. In addition, the rapid removal of sialic acid from solution might be advantageous to the bacterium to damp down host responses. This Escherichia coli O1:K1 / APEC protein is N-acetylneuraminate epimerase.